Consider the following 296-residue polypeptide: 4-diphosphocytidyl-2-C-methyl-D-erythritol kinase (296 aa).

Lys-13 is a catalytic residue. An ATP-binding site is contributed by 104–114 (PMGGGIGGGSS). Asp-146 is an active-site residue.

The protein belongs to the GHMP kinase family. IspE subfamily.

It catalyses the reaction 4-CDP-2-C-methyl-D-erythritol + ATP = 4-CDP-2-C-methyl-D-erythritol 2-phosphate + ADP + H(+). Its pathway is isoprenoid biosynthesis; isopentenyl diphosphate biosynthesis via DXP pathway; isopentenyl diphosphate from 1-deoxy-D-xylulose 5-phosphate: step 3/6. Catalyzes the phosphorylation of the position 2 hydroxy group of 4-diphosphocytidyl-2C-methyl-D-erythritol. The sequence is that of 4-diphosphocytidyl-2-C-methyl-D-erythritol kinase from Hahella chejuensis (strain KCTC 2396).